A 464-amino-acid chain; its full sequence is JmjC domain-containing protein 1 (464 aa).

A JmjC domain is found at 182–349 (LYAKDMHLFR…QMYTALKEQY (168 aa)).

The sequence is that of JmjC domain-containing protein 1 (jmj1) from Schizosaccharomyces pombe (strain 972 / ATCC 24843) (Fission yeast).